The chain runs to 512 residues: Ribose import ATP-binding protein RbsA 1 (512 aa).

2 ABC transporter domains span residues 8-244 (FRME…IGRE) and 254-502 (AHRG…LNIA). Residue 40–47 (GENGAGKS) coordinates ATP.

It belongs to the ABC transporter superfamily. Ribose importer (TC 3.A.1.2.1) family. In terms of assembly, the complex is composed of an ATP-binding protein (RbsA), two transmembrane proteins (RbsC) and a solute-binding protein (RbsB).

Its subcellular location is the cell inner membrane. The catalysed reaction is D-ribose(out) + ATP + H2O = D-ribose(in) + ADP + phosphate + H(+). In terms of biological role, part of the ABC transporter complex RbsABC involved in ribose import. Responsible for energy coupling to the transport system. This is Ribose import ATP-binding protein RbsA 1 from Rhizobium johnstonii (strain DSM 114642 / LMG 32736 / 3841) (Rhizobium leguminosarum bv. viciae).